Consider the following 134-residue polypeptide: MRHRSGLRKLNRTSSHRQAMFRNMANSLLRHEVIKTTLPKAKELRRVVEPLITLGKKPSLSNRRLAFNRMRDREMVVKLFDVLGPRFAERNGGYLRILKFGFRDGDNAPLALIELLDRPDEGEEGANVSEAAAA.

The protein belongs to the bacterial ribosomal protein bL17 family. In terms of assembly, part of the 50S ribosomal subunit. Contacts protein L32.

This chain is Large ribosomal subunit protein bL17, found in Aromatoleum aromaticum (strain DSM 19018 / LMG 30748 / EbN1) (Azoarcus sp. (strain EbN1)).